We begin with the raw amino-acid sequence, 56 residues long: MAHENVWFSHPRRFGKGSRQCRVCSSHTGLIRKYDLNICRQCFRERASDIGFNKYR.

C21, C24, C39, and C42 together coordinate Zn(2+).

Belongs to the universal ribosomal protein uS14 family. Zn(2+) serves as cofactor.

This Candida glabrata (strain ATCC 2001 / BCRC 20586 / JCM 3761 / NBRC 0622 / NRRL Y-65 / CBS 138) (Yeast) protein is Small ribosomal subunit protein uS14 (RPS29).